The primary structure comprises 165 residues: Cyclic pyranopterin monophosphate synthase (165 aa).

Substrate contacts are provided by residues 83-85 (FCH) and 120-121 (ME). The active site involves D135.

This sequence belongs to the MoaC family. Homohexamer; trimer of dimers.

The catalysed reaction is (8S)-3',8-cyclo-7,8-dihydroguanosine 5'-triphosphate = cyclic pyranopterin phosphate + diphosphate. The protein operates within cofactor biosynthesis; molybdopterin biosynthesis. In terms of biological role, catalyzes the conversion of (8S)-3',8-cyclo-7,8-dihydroguanosine 5'-triphosphate to cyclic pyranopterin monophosphate (cPMP). The polypeptide is Cyclic pyranopterin monophosphate synthase (Xanthomonas campestris pv. campestris (strain 8004)).